A 217-amino-acid chain; its full sequence is MLEIFDVSYTLLSEKKSEELFTLRKETFKDRLNWAVKCINGMEFDQYDDDNATYLFGVEGDQVICSSRLIETKYPNMITGTFFPYFEKIDIPEGKYIESSRFFVDKARSKTILGNSYPVSTMFFLATVNYSKSKGYDGVYTIVSHPMLTILKRSGWKISIVEQGMSEKHERVYLLFLPVDNESQDVLVRRINHNQEFVESKLREWPLSFEPMTEPVG.

The protein belongs to the autoinducer synthase family.

The enzyme catalyses a fatty acyl-[ACP] + S-adenosyl-L-methionine = an N-acyl-L-homoserine lactone + S-methyl-5'-thioadenosine + holo-[ACP] + H(+). Its function is as follows. Required for the synthesis of OHHL (N-(3-oxohexanoyl)-L-homoserine lactone), an autoinducer molecule which binds to ExpR and thus acts in virulence (soft rot disease) through the activation of genes for plant tissue macerating enzymes. The chain is Acyl-homoserine-lactone synthase (expI) from Pectobacterium parmentieri.